A 264-amino-acid chain; its full sequence is Flagellar basal-body rod protein FlgG (264 aa).

This sequence belongs to the flagella basal body rod proteins family. In terms of assembly, the basal body constitutes a major portion of the flagellar organelle and consists of four rings (L,P,S, and M) mounted on a central rod. The rod consists of about 26 subunits of FlgG in the distal portion, and FlgB, FlgC and FlgF are thought to build up the proximal portion of the rod with about 6 subunits each.

The protein resides in the bacterial flagellum basal body. The polypeptide is Flagellar basal-body rod protein FlgG (flgG) (Bacillus subtilis (strain 168)).